The primary structure comprises 149 residues: Nucleoside diphosphate kinase (149 aa).

6 residues coordinate ATP: Lys-9, Phe-57, Arg-85, Thr-91, Arg-102, and Asn-112. His-115 functions as the Pros-phosphohistidine intermediate in the catalytic mechanism.

Belongs to the NDK family. Homotetramer. Requires Mg(2+) as cofactor.

It localises to the cytoplasm. The enzyme catalyses a 2'-deoxyribonucleoside 5'-diphosphate + ATP = a 2'-deoxyribonucleoside 5'-triphosphate + ADP. The catalysed reaction is a ribonucleoside 5'-diphosphate + ATP = a ribonucleoside 5'-triphosphate + ADP. Its function is as follows. Major role in the synthesis of nucleoside triphosphates other than ATP. The ATP gamma phosphate is transferred to the NDP beta phosphate via a ping-pong mechanism, using a phosphorylated active-site intermediate. This is Nucleoside diphosphate kinase from Staphylococcus aureus (strain Mu3 / ATCC 700698).